We begin with the raw amino-acid sequence, 80 residues long: Large ribosomal subunit protein bL31B (80 aa).

It belongs to the bacterial ribosomal protein bL31 family. Type B subfamily. As to quaternary structure, part of the 50S ribosomal subunit.

This chain is Large ribosomal subunit protein bL31B, found in Shouchella clausii (strain KSM-K16) (Alkalihalobacillus clausii).